We begin with the raw amino-acid sequence, 87 residues long: Large ribosomal subunit protein eL33 (87 aa).

This sequence belongs to the eukaryotic ribosomal protein eL33 family.

The protein is Large ribosomal subunit protein eL33 of Pyrococcus abyssi (strain GE5 / Orsay).